The sequence spans 247 residues: tRNA uridine(34) hydroxylase (247 aa).

A Rhodanese domain is found at 124–218 (TKQNVILIDT…YLEDTHNKNN (95 aa)). Cysteine 178 functions as the Cysteine persulfide intermediate in the catalytic mechanism.

It belongs to the TrhO family.

It carries out the reaction uridine(34) in tRNA + AH2 + O2 = 5-hydroxyuridine(34) in tRNA + A + H2O. Its function is as follows. Catalyzes oxygen-dependent 5-hydroxyuridine (ho5U) modification at position 34 in tRNAs. In Rickettsia prowazekii (strain Madrid E), this protein is tRNA uridine(34) hydroxylase.